Consider the following 57-residue polypeptide: Large ribosomal subunit protein bL32 (57 aa).

Basic residues predominate over residues 1–19 (MAVPKRRKSRSNTRSRRSQ). Residues 1–22 (MAVPKRRKSRSNTRSRRSQWKA) are disordered.

It belongs to the bacterial ribosomal protein bL32 family.

The polypeptide is Large ribosomal subunit protein bL32 (Mycobacterium tuberculosis (strain ATCC 25177 / H37Ra)).